The primary structure comprises 70 residues: Toxin Isom2 (70 aa).

In terms of domain architecture, LCN-type CS-alpha/beta spans 2 to 65 (KNGYAVDSSG…ISDTRKKYCD (64 aa)). 4 disulfide bridges follow: Cys16-Cys37, Cys22-Cys42, Cys26-Cys44, and Cys38-Cys64.

Expressed by the venom gland.

It is found in the secreted. Its function is as follows. Excitatory insect beta-toxins induce a spastic paralysis. They bind voltage-independently at site-4 of sodium channels (Nav) and shift the voltage of activation toward more negative potentials thereby affecting sodium channel activation and promoting spontaneous and repetitive firing. The protein is Toxin Isom2 of Isometrus vittatus (Bark scorpion).